Reading from the N-terminus, the 407-residue chain is Phosphopentomutase (407 aa).

Mn(2+) contacts are provided by aspartate 10, aspartate 306, histidine 311, aspartate 347, histidine 348, and histidine 359.

This sequence belongs to the phosphopentomutase family. The cofactor is Mn(2+).

Its subcellular location is the cytoplasm. It catalyses the reaction 2-deoxy-alpha-D-ribose 1-phosphate = 2-deoxy-D-ribose 5-phosphate. The enzyme catalyses alpha-D-ribose 1-phosphate = D-ribose 5-phosphate. The protein operates within carbohydrate degradation; 2-deoxy-D-ribose 1-phosphate degradation; D-glyceraldehyde 3-phosphate and acetaldehyde from 2-deoxy-alpha-D-ribose 1-phosphate: step 1/2. Functionally, isomerase that catalyzes the conversion of deoxy-ribose 1-phosphate (dRib-1-P) and ribose 1-phosphate (Rib-1-P) to deoxy-ribose 5-phosphate (dRib-5-P) and ribose 5-phosphate (Rib-5-P), respectively. The polypeptide is Phosphopentomutase (Salmonella dublin (strain CT_02021853)).